We begin with the raw amino-acid sequence, 411 residues long: Mitotic apparatus protein p62 (411 aa).

3 stretches are compositionally biased toward acidic residues: residues 134–156 (AYEV…EEEE), 183–201 (ELDE…EEEI), and 246–321 (DDDE…EEDS). A disordered region spans residues 134-378 (AYEVGDEDLE…KSPSKPKKEE (245 aa)). The span at 351–367 (GMKEKKTYSLEDMKQDL) shows a compositional bias: basic and acidic residues.

The protein belongs to the nucleoplasmin family. Phosphorylated by CaM-kinase II in vitro.

Its subcellular location is the nucleus. In terms of biological role, required for mitotic progression. Binds to chromatin. This is Mitotic apparatus protein p62 from Lytechinus pictus (Painted sea urchin).